The following is an 81-amino-acid chain: MSHAVKIYDTCIGCTQCVRACPLDVLEMVPWDGCKASQIASSPRTEDCVGCKRCETACPTDFLSIRVYLGDETTRSMGLAY.

2 4Fe-4S ferredoxin-type domains span residues 2 to 31 (SHAVKIYDTCIGCTQCVRACPLDVLEMVPW) and 39 to 68 (IASSPRTEDCVGCKRCETACPTDFLSIRVY). Residues C11, C14, C17, C21, C48, C51, C54, and C58 each coordinate [4Fe-4S] cluster.

The cyanobacterial PSI reaction center is composed of one copy each of PsaA,B,C,D,E,F,I,J,K,L,M and X, and forms trimeric complexes. It depends on [4Fe-4S] cluster as a cofactor.

The protein resides in the cellular thylakoid membrane. The enzyme catalyses reduced [plastocyanin] + hnu + oxidized [2Fe-2S]-[ferredoxin] = oxidized [plastocyanin] + reduced [2Fe-2S]-[ferredoxin]. Apoprotein for the two 4Fe-4S centers FA and FB of photosystem I (PSI); essential for photochemical activity. FB is the terminal electron acceptor of PSI, donating electrons to ferredoxin. The C-terminus interacts with PsaA/B/D and helps assemble the protein into the PSI complex. Required for binding of PsaD and PsaE to PSI. PSI is a plastocyanin/cytochrome c6-ferredoxin oxidoreductase, converting photonic excitation into a charge separation, which transfers an electron from the donor P700 chlorophyll pair to the spectroscopically characterized acceptors A0, A1, FX, FA and FB in turn. This chain is Photosystem I iron-sulfur center, found in Prochlorococcus marinus (strain NATL2A).